The following is a 387-amino-acid chain: ATP phosphoribosyltransferase regulatory subunit (387 aa).

This sequence belongs to the class-II aminoacyl-tRNA synthetase family. HisZ subfamily. As to quaternary structure, heteromultimer composed of HisG and HisZ subunits.

It localises to the cytoplasm. It functions in the pathway amino-acid biosynthesis; L-histidine biosynthesis; L-histidine from 5-phospho-alpha-D-ribose 1-diphosphate: step 1/9. Its function is as follows. Required for the first step of histidine biosynthesis. May allow the feedback regulation of ATP phosphoribosyltransferase activity by histidine. This Polynucleobacter asymbioticus (strain DSM 18221 / CIP 109841 / QLW-P1DMWA-1) (Polynucleobacter necessarius subsp. asymbioticus) protein is ATP phosphoribosyltransferase regulatory subunit.